Reading from the N-terminus, the 132-residue chain is Small ribosomal subunit protein uS8 (132 aa).

It belongs to the universal ribosomal protein uS8 family. As to quaternary structure, part of the 30S ribosomal subunit. Contacts proteins S5 and S12.

Its function is as follows. One of the primary rRNA binding proteins, it binds directly to 16S rRNA central domain where it helps coordinate assembly of the platform of the 30S subunit. This chain is Small ribosomal subunit protein uS8, found in Xanthomonas oryzae pv. oryzae (strain MAFF 311018).